A 363-amino-acid chain; its full sequence is NAD(P)H-quinone oxidoreductase subunit 1, chloroplastic (363 aa).

Transmembrane regions (helical) follow at residues 28 to 48, 98 to 118, 129 to 149, 253 to 273, 274 to 294, 300 to 320, and 336 to 356; these read WVLA…LVIV, FSIG…VIPF, IGIF…LMSG, FGLF…FVTV, LYLG…LVEI, IFGT…FLFI, and LLNL…LLTT.

The protein belongs to the complex I subunit 1 family. As to quaternary structure, NDH is composed of at least 16 different subunits, 5 of which are encoded in the nucleus.

The protein localises to the plastid. Its subcellular location is the chloroplast thylakoid membrane. The catalysed reaction is a plastoquinone + NADH + (n+1) H(+)(in) = a plastoquinol + NAD(+) + n H(+)(out). The enzyme catalyses a plastoquinone + NADPH + (n+1) H(+)(in) = a plastoquinol + NADP(+) + n H(+)(out). In terms of biological role, NDH shuttles electrons from NAD(P)H:plastoquinone, via FMN and iron-sulfur (Fe-S) centers, to quinones in the photosynthetic chain and possibly in a chloroplast respiratory chain. The immediate electron acceptor for the enzyme in this species is believed to be plastoquinone. Couples the redox reaction to proton translocation, and thus conserves the redox energy in a proton gradient. The protein is NAD(P)H-quinone oxidoreductase subunit 1, chloroplastic of Citrus sinensis (Sweet orange).